Consider the following 1605-residue polypeptide: Ribosome-binding protein 1 (1605 aa).

At 1 to 7 (MDIYDTQ) the chain is on the lumenal side. A helical transmembrane segment spans residues 8–28 (TLGVVVFGGFMVVSAIGIFLV). Topologically, residues 29–1605 (STFSMKETSY…GSSSKEGTSV (1577 aa)) are cytoplasmic. Residues 44-88 (NQRKEMAKTHHQKGEKKKKEKTVEKKGKTKKKEEKPNGKIPEHDL) form a disordered region. Residues 52–63 (THHQKGEKKKKE) are compositionally biased toward basic residues. Positions 64-88 (KTVEKKGKTKKKEEKPNGKIPEHDL) are enriched in basic and acidic residues. Residue Ser111 is modified to Phosphoserine. The tract at residues 114–150 (SSVGHTPIATVPAMPQEKLASSPKDRKKKEKKVAKVE) is disordered. Lys148 is covalently cross-linked (Glycyl lysine isopeptide (Lys-Gly) (interchain with G-Cter in SUMO2)). A phosphoserine mark is found at Ser159 and Ser165. The disordered stretch occupies residues 172-849 (ATPKEVPMVA…PGPPDCDGPL (678 aa)). 61 repeat units span residues 196–205 (SQGKKGQGAQ), 206–215 (NQAKKGEGAQ), 216–225 (NQGKKGEGAQ), 226–235 (NQAKKGEGAQ), 236–245 (NQAKKGEGAQ), 246–255 (NQGKKGEGAQ), 256–265 (NQAKKGEGGQ), 266–275 (NQAKKGEGAQ), 276–285 (NQGKKGEGAQ), 286–295 (NQGKKGEGAQ), 296–305 (NQAKKGEGAQ), 306–315 (NQAKKGEGAQ), 316–325 (NQGKKGEGAQ), 326–335 (NQSKKGEGAQ), 336–345 (NQAKKGEGGQ), 346–355 (NQAKKGEGAQ), 356–365 (NQAKKGEGAQ), 366–375 (NQAKKGEGVQ), 376–385 (NQAKKGVEGA), 386–395 (QNQGKKGEAN), 396–405 (QNQAKKGEGG), 406–415 (QNQTKKGEGP), 416–425 (QNQGKKGEAA), 426–435 (QKQDKKIEGA), 436–445 (QNQGKKPEGT), 446–455 (SNQGKKGEGA), 456–465 (QNQGKKGEGA), 466–475 (QNQSKKGEGA), 476–485 (QNQAKKGEGG), 486–495 (QNQAKKGEGA), 496–505 (QNQAKKGEGA), 506–515 (QNQAKKGEGV), 516–525 (QNQAKKGVEG), 527–536 (QNQGKKGEAN), 537–546 (QNQAKKGEGG), 547–556 (QNQTKKGEGP), 557–566 (QNQGKKGEAA), 567–576 (QKQDKKIEGA), 577–586 (QNQGKKPEGT), 587–596 (SNQGKKGEGA), 597–606 (QNQGKKGEGA), 607–616 (QNQGKKGEGA), 617–626 (QNQGKKGEGA), 628–637 (NQGKKGEGAQ), 638–647 (NQGKKGEGAQ), 648–657 (NQGKKGEGAQ), 658–667 (NQGKKGEGPQ), 668–677 (NQAKKGEGAQ), 678–687 (NQGKKGEGAQ), 688–697 (NQGKKGEGAQ), 698–707 (NQGKKAEGVQ), 708–717 (SQSKKGEGTQ), 718–727 (NQGKKGDGNP), 729–738 (QGKKGEGASN), 739–748 (QNRKTDTVAN), 749–758 (QGTKQEGVSN), 759–768 (QVKKSEGSPN), 769–778 (QGKKAEGAPN), 779–788 (QGKKKDGSPS), 789–798 (QAKKVDAAAN), and 799–808 (QGKKSEMAPA). Positions 196-808 (SQGKKGQGAQ…QGKKSEMAPA (613 aa)) are 61 X 10 AA tandem repeats of [NSQ]-[NKQVGA]-[GSAQKRT]-[ASGDTK]-[KGTQSAV]-[KGAED]-[EQVGIPTDMA]-[EGVAS]-[AGVPETNS]-[AQNGPTVS]. Positions 197 to 208 (QGKKGQGAQNQA) are enriched in low complexity. Composition is skewed to polar residues over residues 224–258 (AQNQ…QNQA), 274–338 (AQNQ…QNQA), 354–378 (AQNQ…QNQA), and 385–399 (AQNQ…QNQA). The span at 420–433 (KKGEAAQKQDKKIE) shows a compositional bias: basic and acidic residues. Composition is skewed to polar residues over residues 435-479 (AQNQ…QNQA), 495-519 (AQNQ…QNQA), and 526-540 (AQNQ…QNQA). Basic and acidic residues predominate over residues 561–574 (KKGEAAQKQDKKIE). 2 stretches are compositionally biased toward polar residues: residues 576–720 (AQNQ…QNQG) and 736–769 (ASNQ…SPNQ). At Ser786 the chain carries Phosphoserine. Positions 811 to 821 (QKASMVQSQEA) are enriched in polar residues. Residue Ser818 is modified to Phosphoserine. Lys823 participates in a covalent cross-link: Glycyl lysine isopeptide (Lys-Gly) (interchain with G-Cter in SUMO1). An N6-acetyllysine modification is found at Lys1135. Residues Ser1162 and Ser1178 each carry the phosphoserine modification. Disordered regions lie at residues 1460 to 1481 (MRSH…AEQD) and 1571 to 1605 (TTQE…GTSV). Residues 1576–1598 (LTKEKDTVKKLQEQLGKAEDGSS) show a composition bias toward basic and acidic residues.

Widely expressed.

Its subcellular location is the endoplasmic reticulum membrane. In terms of biological role, acts as a ribosome receptor and mediates interaction between the ribosome and the endoplasmic reticulum membrane. This is Ribosome-binding protein 1 (Rrbp1) from Mus musculus (Mouse).